Reading from the N-terminus, the 642-residue chain is Threonine--tRNA ligase (642 aa).

Residues 1 to 61 (MPVITLPDGS…HEDASLSIIT (61 aa)) enclose the TGS domain. The catalytic stretch occupies residues 243–534 (DHRKIGKQLD…LIEEYAGRFP (292 aa)). Residues Cys334, His385, and His511 each coordinate Zn(2+).

It belongs to the class-II aminoacyl-tRNA synthetase family. As to quaternary structure, homodimer. It depends on Zn(2+) as a cofactor.

The protein localises to the cytoplasm. It carries out the reaction tRNA(Thr) + L-threonine + ATP = L-threonyl-tRNA(Thr) + AMP + diphosphate + H(+). In terms of biological role, catalyzes the attachment of threonine to tRNA(Thr) in a two-step reaction: L-threonine is first activated by ATP to form Thr-AMP and then transferred to the acceptor end of tRNA(Thr). Also edits incorrectly charged L-seryl-tRNA(Thr). The chain is Threonine--tRNA ligase from Shewanella amazonensis (strain ATCC BAA-1098 / SB2B).